An 81-amino-acid chain; its full sequence is Metallocarboxypeptidase inhibitor (81 aa).

Residues 1–15 form the signal peptide; the sequence is MFLLVFLCCLHLVIS. Disulfide bonds link Cys25-Cys48, Cys32-Cys76, Cys33-Cys57, and Cys36-Cys72.

Its function is as follows. Tightly binding, competitive inhibitor of different types of pancreatic-like carboxypeptidases. Inhibits human CPA4. The protein is Metallocarboxypeptidase inhibitor of Hirudo medicinalis (Medicinal leech).